A 107-amino-acid chain; its full sequence is U1-lycotoxin-Ls1w (107 aa).

A signal peptide spans 1–20; the sequence is MLKVLVVVALLVTLISYSSS. The propeptide occupies 21–41; sequence EGIDDLEADELLSLMANEQTR. 4 cysteine pairs are disulfide-bonded: Cys-44–Cys-59, Cys-51–Cys-68, Cys-58–Cys-86, and Cys-70–Cys-84.

Belongs to the neurotoxin 19 (CSTX) family. 04 (U1-Lctx) subfamily. As to expression, expressed by the venom gland.

The protein localises to the secreted. The sequence is that of U1-lycotoxin-Ls1w from Lycosa singoriensis (Wolf spider).